The chain runs to 390 residues: Chorismate synthase (390 aa).

NADP(+)-binding residues include R39 and R45. Residues 132–134, 253–254, G298, 313–317, and R339 each bind FMN; these read RSS, NA, and KPIPT.

The protein belongs to the chorismate synthase family. Homotetramer. FMNH2 serves as cofactor.

The catalysed reaction is 5-O-(1-carboxyvinyl)-3-phosphoshikimate = chorismate + phosphate. It functions in the pathway metabolic intermediate biosynthesis; chorismate biosynthesis; chorismate from D-erythrose 4-phosphate and phosphoenolpyruvate: step 7/7. Its function is as follows. Catalyzes the anti-1,4-elimination of the C-3 phosphate and the C-6 proR hydrogen from 5-enolpyruvylshikimate-3-phosphate (EPSP) to yield chorismate, which is the branch point compound that serves as the starting substrate for the three terminal pathways of aromatic amino acid biosynthesis. This reaction introduces a second double bond into the aromatic ring system. The protein is Chorismate synthase of Shouchella clausii (strain KSM-K16) (Alkalihalobacillus clausii).